Consider the following 475-residue polypeptide: Aspartyl/glutamyl-tRNA(Asn/Gln) amidotransferase subunit B (475 aa).

It belongs to the GatB/GatE family. GatB subfamily. As to quaternary structure, heterotrimer of A, B and C subunits.

It carries out the reaction L-glutamyl-tRNA(Gln) + L-glutamine + ATP + H2O = L-glutaminyl-tRNA(Gln) + L-glutamate + ADP + phosphate + H(+). The enzyme catalyses L-aspartyl-tRNA(Asn) + L-glutamine + ATP + H2O = L-asparaginyl-tRNA(Asn) + L-glutamate + ADP + phosphate + 2 H(+). Its function is as follows. Allows the formation of correctly charged Asn-tRNA(Asn) or Gln-tRNA(Gln) through the transamidation of misacylated Asp-tRNA(Asn) or Glu-tRNA(Gln) in organisms which lack either or both of asparaginyl-tRNA or glutaminyl-tRNA synthetases. The reaction takes place in the presence of glutamine and ATP through an activated phospho-Asp-tRNA(Asn) or phospho-Glu-tRNA(Gln). The polypeptide is Aspartyl/glutamyl-tRNA(Asn/Gln) amidotransferase subunit B (Thermodesulfovibrio yellowstonii (strain ATCC 51303 / DSM 11347 / YP87)).